Consider the following 271-residue polypeptide: L-aspartate dehydrogenase (271 aa).

Residues alanine 124 and asparagine 192 each coordinate NAD(+). Histidine 222 is a catalytic residue.

It belongs to the L-aspartate dehydrogenase family.

It catalyses the reaction L-aspartate + NADP(+) + H2O = oxaloacetate + NH4(+) + NADPH + H(+). It carries out the reaction L-aspartate + NAD(+) + H2O = oxaloacetate + NH4(+) + NADH + H(+). Its pathway is cofactor biosynthesis; NAD(+) biosynthesis; iminoaspartate from L-aspartate (dehydrogenase route): step 1/1. Functionally, specifically catalyzes the NAD or NADP-dependent dehydrogenation of L-aspartate to iminoaspartate. In Methanococcoides burtonii (strain DSM 6242 / NBRC 107633 / OCM 468 / ACE-M), this protein is L-aspartate dehydrogenase.